The following is a 93-amino-acid chain: Small ribosomal subunit protein uS19 (93 aa).

This sequence belongs to the universal ribosomal protein uS19 family.

Protein S19 forms a complex with S13 that binds strongly to the 16S ribosomal RNA. This Anaplasma marginale (strain Florida) protein is Small ribosomal subunit protein uS19.